We begin with the raw amino-acid sequence, 176 residues long: Thiol:disulfide interchange protein HelX (176 aa).

A signal peptide spans 1 to 19 (MAKPLMFLPLLVMAGFVGA). One can recognise a Thioredoxin domain in the interval 35-172 (ALAGKEAPAV…ITKKIDPLLA (138 aa)). Cys-75 and Cys-78 are disulfide-bonded.

This sequence belongs to the thioredoxin family. DsbE subfamily.

The protein localises to the periplasm. In terms of biological role, required for disulfide bond formation in some periplasmic proteins. Also acts as a disulfide oxidoreductase in cytochromes c biogenesis. The cysteines of apocytochromes c must be in the reduced state for covalent linkage between the two moieties to occur. The sequence is that of Thiol:disulfide interchange protein HelX (helX) from Rhodobacter capsulatus (strain ATCC BAA-309 / NBRC 16581 / SB1003).